The sequence spans 132 residues: Small ribosomal subunit protein uS9 (132 aa).

The protein belongs to the universal ribosomal protein uS9 family.

This chain is Small ribosomal subunit protein uS9 (rpsI), found in Mycoplasma pneumoniae (strain ATCC 29342 / M129 / Subtype 1) (Mycoplasmoides pneumoniae).